We begin with the raw amino-acid sequence, 794 residues long: Protein transport protein SEC23 G (794 aa).

Cysteine 56, cysteine 59, cysteine 78, and cysteine 81 together coordinate Zn(2+). The interval 56–81 (CSRCGAVLNPYARVDYQSRIWSCPFC) is zinc finger-like.

It belongs to the SEC23/SEC24 family. SEC23 subfamily. Component of the coat protein complex II (COPII), composed of at least five proteins: the Sec23/24 complex, the Sec13/31 complex and Sar1. Interacts with SEC24A.

The protein localises to the cytoplasmic vesicle. Its subcellular location is the COPII-coated vesicle membrane. It localises to the endoplasmic reticulum membrane. It is found in the membrane. Its function is as follows. Component of the coat protein complex II (COPII) which promotes the formation of transport vesicles from the endoplasmic reticulum (ER). The coat has two main functions, the physical deformation of the endoplasmic reticulum membrane into vesicles and the selection of cargo molecules. The chain is Protein transport protein SEC23 G from Arabidopsis thaliana (Mouse-ear cress).